We begin with the raw amino-acid sequence, 400 residues long: Enoyl-[acyl-carrier-protein] reductase [NADH] (400 aa).

NAD(+) is bound by residues 48-53, 74-75, 111-112, and 139-140; these read GSSSGY, FE, DA, and LA. Tyrosine 225 provides a ligand contact to substrate. Catalysis depends on tyrosine 235, which acts as the Proton donor. NAD(+) contacts are provided by residues lysine 244 and 273 to 275; that span reads VVT.

It belongs to the TER reductase family. As to quaternary structure, monomer.

The enzyme catalyses a 2,3-saturated acyl-[ACP] + NAD(+) = a (2E)-enoyl-[ACP] + NADH + H(+). The protein operates within lipid metabolism; fatty acid biosynthesis. Involved in the final reduction of the elongation cycle of fatty acid synthesis (FAS II). Catalyzes the reduction of a carbon-carbon double bond in an enoyl moiety that is covalently linked to an acyl carrier protein (ACP). The polypeptide is Enoyl-[acyl-carrier-protein] reductase [NADH] (Shewanella baltica (strain OS223)).